The sequence spans 266 residues: MSGPIVIFDSGIGGLSIFDEIKKVLPDQGYCYLFDNARLPYGELEESVLIKGCVDLICEQVKRIDAVLVVVACNSASTLVLPGLRARLSIPIVGVVPAIKPAAQISKTRHIGLLATHGTIKRSYTRELIKEFAGDCKVDLFGSSELVMLAEAKLAGEKLDLIKLESQLKPIQHSDLDTLVLGCTHFPIIADEIQQVLGAGVKLLDSGKAIAQRVSYLLENIEDKLDNSAGELMAIYTTEEITPGLATRLAEKGFTTIASRSSANLD.

Residues 9–10 and 41–42 each bind substrate; these read DS and YG. Cys-73 (proton donor/acceptor) is an active-site residue. 74-75 serves as a coordination point for substrate; sequence NS. Cys-183 serves as the catalytic Proton donor/acceptor. 184–185 contacts substrate; it reads TH.

Belongs to the aspartate/glutamate racemases family.

The catalysed reaction is L-glutamate = D-glutamate. It functions in the pathway cell wall biogenesis; peptidoglycan biosynthesis. Functionally, provides the (R)-glutamate required for cell wall biosynthesis. The chain is Glutamate racemase from Shewanella halifaxensis (strain HAW-EB4).